Reading from the N-terminus, the 237-residue chain is tRNA (guanine-N(7)-)-methyltransferase (237 aa).

Positions 35, 60, 87, and 113 each coordinate S-adenosyl-L-methionine. Residue aspartate 113 is part of the active site. Positions 117 and 149 each coordinate substrate.

It belongs to the class I-like SAM-binding methyltransferase superfamily. TrmB family.

It carries out the reaction guanosine(46) in tRNA + S-adenosyl-L-methionine = N(7)-methylguanosine(46) in tRNA + S-adenosyl-L-homocysteine. It functions in the pathway tRNA modification; N(7)-methylguanine-tRNA biosynthesis. Functionally, catalyzes the formation of N(7)-methylguanine at position 46 (m7G46) in tRNA. The sequence is that of tRNA (guanine-N(7)-)-methyltransferase from Synechococcus sp. (strain CC9311).